Reading from the N-terminus, the 295-residue chain is Deoxyuridine 5'-triphosphate nucleotidohydrolase (295 aa).

178 to 180 is a binding site for substrate; that stretch reads RSG. Basic and acidic residues predominate over residues 260–272; the sequence is NSVRKHTHEDNPV. The tract at residues 260 to 295 is disordered; the sequence is NSVRKHTHEDNPVHEPNVATASADIRGTKGLGSSGF.

The protein belongs to the dUTPase family. Requires Mg(2+) as cofactor.

The enzyme catalyses dUTP + H2O = dUMP + diphosphate + H(+). Functionally, involved in nucleotide metabolism: produces dUMP, the immediate precursor of thymidine nucleotides and decreases the intracellular concentration of dUTP to avoid uracil incorporation into viral DNA. The chain is Deoxyuridine 5'-triphosphate nucleotidohydrolase from Human herpesvirus 8 type P (isolate GK18) (HHV-8).